We begin with the raw amino-acid sequence, 1234 residues long: Chromosome-associated kinesin KIF4B (1234 aa).

Residues 9–336 (PVRVALRCRP…LRYADRARKI (328 aa)) form the Kinesin motor domain. Residue 88 to 95 (GQTGSGKT) coordinates ATP. Residues 350 to 999 (ELNHLKQQVQ…IKQKLILLQV (650 aa)) adopt a coiled-coil conformation. Residue Ser394 is modified to Phosphoserine. Disordered regions lie at residues 494–513 (EEAQVETSPETSRSSDAFTT) and 712–737 (KRLKDALQKQREVTDKRKETQSHGKE). The segment covering 498–513 (VETSPETSRSSDAFTT) has biased composition (polar residues). Positions 663–1234 (QWKQKKDKEV…GCSPIEEEAH (572 aa)) are interaction with PRC1. The span at 713-737 (RLKDALQKQREVTDKRKETQSHGKE) shows a compositional bias: basic and acidic residues. The Nuclear localization signal signature appears at 793–798 (PKLRKC). Thr799 carries the phosphothreonine modification. Phosphoserine is present on residues Ser801, Ser951, Ser1001, Ser1013, Ser1017, and Ser1028. Residues 1000–1234 (ASRQKHLPND…GCSPIEEEAH (235 aa)) form a globular region. Disordered stretches follow at residues 1007–1030 (PNDTLLSPDSSFEYIPPKPKPSRV), 1052–1076 (VNEHEDGDGDGDSDEGDDEEWKPTK), 1122–1143 (RQQGKDSLGTVEQTQDSEGSFK), and 1183–1234 (TAPA…EEAH). Over residues 1056 to 1071 (EDGDGDGDSDEGDDEE) the composition is skewed to acidic residues. The interval 1086–1144 (QGCSCKGWCGNKQCGCRKQKSDCGVDCSCDPTKCRNRQQGKDSLGTVEQTQDSEGSFKL) is CRD; required for [4Fe-4S] cluster binding and localization to the spindle midzone and midbody during anaphase and telophase. Ser1128 carries the post-translational modification Phosphoserine. Thr1183 is subject to Phosphothreonine. Ser1188 bears the Phosphoserine mark. Residue Lys1196 forms a Glycyl lysine isopeptide (Lys-Gly) (interchain with G-Cter in SUMO2) linkage. The residue at position 1227 (Ser1227) is a Phosphoserine.

The protein belongs to the TRAFAC class myosin-kinesin ATPase superfamily. Kinesin family. Chromokinesin subfamily. [2Fe-2S] cluster is required as a cofactor. [4Fe-4S] cluster serves as cofactor. As to expression, specifically expressed in testis.

Its subcellular location is the nucleus matrix. The protein resides in the cytoplasm. It is found in the cytoskeleton. Its function is as follows. Iron-sulfur (Fe-S) cluster binding motor protein that has a role in chromosome segregation during mitosis. Translocates PRC1 to the plus ends of interdigitating spindle microtubules during the metaphase to anaphase transition, an essential step for the formation of an organized central spindle midzone and midbody and for successful cytokinesis. May play a role in mitotic chromosomal positioning and bipolar spindle stabilization. This is Chromosome-associated kinesin KIF4B (KIF4B) from Homo sapiens (Human).